The chain runs to 166 residues: Small ribosomal subunit protein uS5 (166 aa).

The 64-residue stretch at 11 to 74 (LQEKLISVNR…DKARKNMIII (64 aa)) folds into the S5 DRBM domain.

This sequence belongs to the universal ribosomal protein uS5 family. Part of the 30S ribosomal subunit. Contacts proteins S4 and S8.

With S4 and S12 plays an important role in translational accuracy. Functionally, located at the back of the 30S subunit body where it stabilizes the conformation of the head with respect to the body. This is Small ribosomal subunit protein uS5 from Wigglesworthia glossinidia brevipalpis.